The chain runs to 142 residues: Protein KNATM (142 aa).

The stretch at 4–36 forms a coiled coil; that stretch reads KKDENSILENMKQEINHSLKEEAQEEEEILKKR.

In terms of assembly, interacts with KNAT1, KNAT3, KNAT4, BEL1, BLH2, BLH4 and BLH9, but not with BLH8 or the KNATM-A and KNATM-C isoforms. Isoforms KNATM-A and KNATM-C: no interactions with KNATM-B, KNOXX or BELL proteins. As to expression, detected in inflorescences, seedlings, leaves, hydathodes, stems, roots, embryo and siliques. Expressed in a polar pattern in organ primordia and at the boundary of mature organs. Detected in the lateral domains of flower meristems, but not in the inflorescence meristem or the vegetative shoot apical meristem.

Its subcellular location is the cytoplasm. It is found in the nucleus. Its function is as follows. Transcriptional regulator involved in leaf proximal/distal patterning. May act by sequestering BELL transcription factors. This Arabidopsis thaliana (Mouse-ear cress) protein is Protein KNATM.